The sequence spans 293 residues: MMRIALFLLTNLAVMVVFGLVLSLTGIQSSSVQGLMIMALLFGFGGSFVSLLMSKWMALRSVGGEVIEQPRNERERWLVNTVATQARQAGIAMPQVAIYHAPDINAFATGARRDASLVAVSTGLLQNMSPDEAEAVIAHEISHIANGDMVTMTLIQGVVNTFVIFISRILAQLAAGFMGGNRDDGEESNGNPLIYFAVATVLELVFGILASIITMWFSRHREFHADAGSAKLVGREKMIAALQRLKTSYEPQEATSMMAFCINGKSKSLSELFMTHPPLDKRIEALRTGEYLK.

2 helical membrane-spanning segments follow: residues 4-24 and 34-54; these read IALF…VLSL and GLMI…LLMS. His-139 contacts Zn(2+). Glu-140 is a catalytic residue. Residue His-143 coordinates Zn(2+). 2 consecutive transmembrane segments (helical) span residues 158–178 and 193–213; these read VVNT…AGFM and LIYF…ASII. Zn(2+) is bound at residue Glu-222.

The protein belongs to the peptidase M48B family. The cofactor is Zn(2+).

The protein resides in the cell inner membrane. In Escherichia fergusonii (strain ATCC 35469 / DSM 13698 / CCUG 18766 / IAM 14443 / JCM 21226 / LMG 7866 / NBRC 102419 / NCTC 12128 / CDC 0568-73), this protein is Protease HtpX.